Here is a 452-residue protein sequence, read N- to C-terminus: MSLHIIILAAGQGTRMKSELPKVMHCVAGKPLVQHVIDTARRLEPENITVVYGHKGDVVQAGVSGPGLLWAHQAEQLGTGHAVAQGLQNLSDDGQALILYGDVPLTSAATLKNFLAVSQGKLGVLTVTLDNPTGYGRIVRNDAGSVISIVEQKDATEAQKAINEINTGIMAVPVSRLKEWLPKLSNSNAQGEYYLTDIVALAVESGVDIVTAQPSFLHEVEGVNNRIQLAALERAYQQQVAEELMLAGATLRDPARVDVRGVLNVGRDVEIDVNAVFEGDVTLGDRVKIGPNCVIRNAVIANDVTIEASSIIEDARIDAFATVGPFARLRPGAHLFEKAKVGNFVEIKKADIGPGSKVNHLSYVGDATVGSNVNIGAGTITCNYDGANKFKTLIEDDVFVGSNTALVAPVTLGKGATIGAGSTVTKDVSDKQLAVARAQQRNIDGWTRPVKK.

Residues 1 to 226 (MSLHIIILAA…LHEVEGVNNR (226 aa)) form a pyrophosphorylase region. UDP-N-acetyl-alpha-D-glucosamine-binding positions include 8–11 (LAAG), Lys-22, Gln-73, 78–79 (GT), 100–102 (YGD), Gly-136, Glu-151, Asn-166, and Asn-224. Asp-102 is a Mg(2+) binding site. Asn-224 contacts Mg(2+). Positions 227-247 (IQLAALERAYQQQVAEELMLA) are linker. Positions 248–452 (GATLRDPARV…IDGWTRPVKK (205 aa)) are N-acetyltransferase. UDP-N-acetyl-alpha-D-glucosamine is bound by residues Arg-330 and Lys-348. The active-site Proton acceptor is His-360. The UDP-N-acetyl-alpha-D-glucosamine site is built by Tyr-363 and Asn-374. Residues Ala-377, 383–384 (NY), Ser-402, Ala-420, and Arg-437 contribute to the acetyl-CoA site.

In the N-terminal section; belongs to the N-acetylglucosamine-1-phosphate uridyltransferase family. This sequence in the C-terminal section; belongs to the transferase hexapeptide repeat family. In terms of assembly, homotrimer. Mg(2+) is required as a cofactor.

The protein resides in the cytoplasm. It carries out the reaction alpha-D-glucosamine 1-phosphate + acetyl-CoA = N-acetyl-alpha-D-glucosamine 1-phosphate + CoA + H(+). It catalyses the reaction N-acetyl-alpha-D-glucosamine 1-phosphate + UTP + H(+) = UDP-N-acetyl-alpha-D-glucosamine + diphosphate. It functions in the pathway nucleotide-sugar biosynthesis; UDP-N-acetyl-alpha-D-glucosamine biosynthesis; N-acetyl-alpha-D-glucosamine 1-phosphate from alpha-D-glucosamine 6-phosphate (route II): step 2/2. The protein operates within nucleotide-sugar biosynthesis; UDP-N-acetyl-alpha-D-glucosamine biosynthesis; UDP-N-acetyl-alpha-D-glucosamine from N-acetyl-alpha-D-glucosamine 1-phosphate: step 1/1. Its pathway is bacterial outer membrane biogenesis; LPS lipid A biosynthesis. Functionally, catalyzes the last two sequential reactions in the de novo biosynthetic pathway for UDP-N-acetylglucosamine (UDP-GlcNAc). The C-terminal domain catalyzes the transfer of acetyl group from acetyl coenzyme A to glucosamine-1-phosphate (GlcN-1-P) to produce N-acetylglucosamine-1-phosphate (GlcNAc-1-P), which is converted into UDP-GlcNAc by the transfer of uridine 5-monophosphate (from uridine 5-triphosphate), a reaction catalyzed by the N-terminal domain. This Hahella chejuensis (strain KCTC 2396) protein is Bifunctional protein GlmU.